The chain runs to 158 residues: MKSLIVFACLVAYAAADCTSLNRLLVKRQWAEAYGEGTNRELLGNRIWEDLFANMPDARGLFSRVNGNDIDSSEFQAHSLRVLGGLDMCVASLDDVPVLNALLARLNSQHDSRGIPAAGYPAFVASAISAVRATVGARSFDNDAWNSCMNQIVSGISG.

An N-terminal signal peptide occupies residues methionine 1–alanine 16. The Globin domain occupies aspartate 17–glycine 158. Cysteine 18 and cysteine 148 are disulfide-bonded. Residue cysteine 89 participates in hydrogen sulfide binding. Histidine 110 serves as a coordination point for heme b.

This sequence belongs to the globin family. As to quaternary structure, the 400 kDa hemoglobin consists of a spherical 24-mer arranged as a double layer of dome-shaped dodecamers. Each dodecamer is composed of the 3-fold trimer of the tetramer A1-A2-B1-B2 having one intra-tetramer (A1-B2) disulfide bond and one inter-tetramer (B1-B2) disulfide bond per tetramer.

The protein localises to the secreted. In terms of biological role, the extracellular giant hemoglobin is able to bind and transport oxygen and hydrosulfide simultaneously and reversibly at two different sites. This chain is Extracellular giant hemoglobin major globin subunit A2 (ghbA2), found in Oligobrachia mashikoi (Beard worm).